A 185-amino-acid chain; its full sequence is Threonylcarbamoyl-AMP synthase (185 aa).

One can recognise a YrdC-like domain in the interval 4 to 185 (SWRVQQAAQD…IATGQVMRAG (182 aa)).

It belongs to the SUA5 family. TsaC subfamily.

Its subcellular location is the cytoplasm. It carries out the reaction L-threonine + hydrogencarbonate + ATP = L-threonylcarbamoyladenylate + diphosphate + H2O. Its function is as follows. Required for the formation of a threonylcarbamoyl group on adenosine at position 37 (t(6)A37) in tRNAs that read codons beginning with adenine. Catalyzes the conversion of L-threonine, HCO(3)(-)/CO(2) and ATP to give threonylcarbamoyl-AMP (TC-AMP) as the acyladenylate intermediate, with the release of diphosphate. This is Threonylcarbamoyl-AMP synthase from Pseudomonas savastanoi pv. phaseolicola (strain 1448A / Race 6) (Pseudomonas syringae pv. phaseolicola (strain 1448A / Race 6)).